The chain runs to 283 residues: Phytanoyl-CoA dioxygenase (283 aa).

Residues Lys-99, Met-138, 153 to 155 (HQD), and Trp-170 contribute to the 2-oxoglutarate site. Residues His-153 and Asp-155 each contribute to the Fe cation site. His-238 contacts Fe cation. 2-oxoglutarate contacts are provided by Ser-240 and Arg-249.

Belongs to the PhyH family. Fe cation is required as a cofactor. L-ascorbate serves as cofactor.

It catalyses the reaction phytanoyl-CoA + 2-oxoglutarate + O2 = 2-hydroxyphytanoyl-CoA + succinate + CO2. It participates in lipid metabolism; fatty acid metabolism. Its function is as follows. Converts phytanoyl-CoA to 2-hydroxyphytanoyl-CoA. In Arabidopsis thaliana (Mouse-ear cress), this protein is Phytanoyl-CoA dioxygenase.